Reading from the N-terminus, the 257-residue chain is S-methyl-5'-thioadenosine phosphorylase (257 aa).

Phosphate-binding positions include S10 and 50–51 (RH). C130 and C195 form a disulfide bridge. A substrate-binding site is contributed by M180. T181 is a phosphate binding site. Residue 204–206 (DYD) participates in substrate binding. The cysteines at positions 246 and 248 are disulfide-linked.

It belongs to the PNP/MTAP phosphorylase family. MTAP subfamily. Homohexamer. Dimer of a homotrimer.

It catalyses the reaction S-methyl-5'-thioadenosine + phosphate = 5-(methylsulfanyl)-alpha-D-ribose 1-phosphate + adenine. The protein operates within amino-acid biosynthesis; L-methionine biosynthesis via salvage pathway; S-methyl-5-thio-alpha-D-ribose 1-phosphate from S-methyl-5'-thioadenosine (phosphorylase route): step 1/1. Its function is as follows. Catalyzes the reversible phosphorylation of S-methyl-5'-thioadenosine (MTA) to adenine and 5-methylthioribose-1-phosphate. Involved in the breakdown of MTA, a major by-product of polyamine biosynthesis. Responsible for the first step in the methionine salvage pathway after MTA has been generated from S-adenosylmethionine. Has broad substrate specificity with 6-aminopurine nucleosides as preferred substrates. The sequence is that of S-methyl-5'-thioadenosine phosphorylase from Pyrococcus furiosus (strain ATCC 43587 / DSM 3638 / JCM 8422 / Vc1).